We begin with the raw amino-acid sequence, 644 residues long: Coiled-coil domain-containing protein 22 homolog (644 aa).

The interval 316–341 is disordered; sequence DEQKAAAMAGLSESGPPKMDTEEELQ. Coiled-coil stretches lie at residues 333–383, 409–486, and 592–644; these read KMDT…NEQV, DAEN…GKDD, and GVIM…LKSS.

This sequence belongs to the CCDC22 family.

This Nematostella vectensis (Starlet sea anemone) protein is Coiled-coil domain-containing protein 22 homolog.